A 28-amino-acid chain; its full sequence is GIMDTIKDTAKTVAVGLLNKLKCKITGC.

A disulfide bond links C23 and C28.

Expressed by the skin glands.

It localises to the secreted. Its function is as follows. Mast cell degranulating peptide. Causes histamine release from rat peritoneal mast cells in vitro. Has antibacterial activity against the Gram-negative bacterium E.coli K12 and Gram-positive bacterium M.luteus NCT C2665. The polypeptide is Ranatuerin-2SEc (Lithobates sevosus (Dusky gopher frog)).